Reading from the N-terminus, the 380-residue chain is Nucleoporin Nup43 (380 aa).

M1 bears the N-acetylmethionine mark. WD repeat units lie at residues 8–57 (FVSQ…NLDS), 72–110 (RHHG…QTLS), 119–166 (HYHT…AVRT), 170–208 (ADSS…SEPC), 215–255 (GDRV…MPVS), and 259–299 (AHEA…PEKS).

Component of the Nup107-160 subcomplex of the nuclear pore complex (NPC). The Nup107-160 subcomplex includes NUP160, NUP133, NUP107, NUP98, NUP85, NUP43, NUP37, SEH1 and SEC13.

It is found in the chromosome. Its subcellular location is the centromere. The protein resides in the kinetochore. The protein localises to the nucleus. It localises to the nuclear pore complex. Functionally, component of the Nup107-160 subcomplex of the nuclear pore complex (NPC). The Nup107-160 subcomplex is required for the assembly of a functional NPC. The Nup107-160 subcomplex is also required for normal kinetochore microtubule attachment, mitotic progression and chromosome segregation. The protein is Nucleoporin Nup43 (Nup43) of Mus musculus (Mouse).